Reading from the N-terminus, the 242-residue chain is DNA repair protein RecO (242 aa).

The protein belongs to the RecO family. In terms of assembly, monomer.

Involved in DNA repair and RecF pathway recombination. The chain is DNA repair protein RecO from Salmonella schwarzengrund (strain CVM19633).